A 137-amino-acid chain; its full sequence is Putative pre-16S rRNA nuclease (137 aa).

The protein belongs to the YqgF nuclease family.

Its subcellular location is the cytoplasm. Its function is as follows. Could be a nuclease involved in processing of the 5'-end of pre-16S rRNA. The sequence is that of Putative pre-16S rRNA nuclease from Bacillus cereus (strain G9842).